The chain runs to 178 residues: Probetacellulin (178 aa).

Positions 1–31 (MARAAPGSGASPLPLLPALALGLVILHCVVA) are cleaved as a signal peptide. Topologically, residues 32–118 (DGNSTRSPED…LFYLRGDRGQ (87 aa)) are extracellular. A glycan (N-linked (GlcNAc...) asparagine) is linked at asparagine 34. Positions 65 to 105 (HFSRCPKQYKHYCIKGRCRFVVAEQTPSCVCDEGYAGARCE) constitute an EGF-like domain. 3 disulfides stabilise this stretch: cysteine 69/cysteine 82, cysteine 77/cysteine 93, and cysteine 95/cysteine 104. A propeptide spans 112–178 (LRGDRGQILV…NDDIQETSIA (67 aa)) (removed in mature form). Residues 119–139 (ILVICLIAVMVIFIILVVSIC) form a helical membrane-spanning segment. Topologically, residues 140-178 (TCCHPLRKRRKRRKKEEEMETLGKDITPINDDIQETSIA) are cytoplasmic.

As to quaternary structure, monomer. Interacts with EGFR and ERBB4. As to expression, expressed in a wide range of tissues, including the mammary gland.

The protein localises to the secreted. It is found in the extracellular space. It localises to the cell membrane. Functionally, growth factor that binds to EGFR, ERBB4 and other EGF receptor family members. Potent mitogen for retinal pigment epithelial cells and vascular smooth muscle cells. The chain is Probetacellulin (BTC) from Bos taurus (Bovine).